Consider the following 390-residue polypeptide: MSAAIVNAVKQCGYFNQGQCLSCRHIQQPLAQQVAVKTQTLLQLLAPFIPANSAELFLPPITGDDSGFRNKAKMVVLGAAHEPVLGIVSPSGEAVDLCDCLLYPADMQALLHRLTRFVQQAGLPPYRVDKAKGELKFILLTRSQVRGEYLLRFVLRSHNGIERIERELPALLAEYPQIKVVSVNIQPVHMAILEGDEEIFLTENTRLEERFNHVPLFIRPKSFFQTNPQVAAQLYQTAREWVAEFSPRSLWDLFCGVGGFGLHCASKDITLTGIEIEAEAIACAQMSAQMMGLENVQFMALDSTDFAKGKSAADKPDLIIVNPPRRGIGEALCQSLSEFAPKAILYSSCNPKTLAKDLEHIQGYHLTKVQLFDLFPHTDHFEVLAMLVKD.

Residues Cys-12, Cys-20, Cys-23, and Cys-100 each coordinate [4Fe-4S] cluster. The S-adenosyl-L-methionine site is built by Gln-225, Phe-254, Glu-275, and Asn-322. Cys-349 acts as the Nucleophile in catalysis.

It belongs to the class I-like SAM-binding methyltransferase superfamily. RNA M5U methyltransferase family. RlmC subfamily.

It catalyses the reaction uridine(747) in 23S rRNA + S-adenosyl-L-methionine = 5-methyluridine(747) in 23S rRNA + S-adenosyl-L-homocysteine + H(+). Its function is as follows. Catalyzes the formation of 5-methyl-uridine at position 747 (m5U747) in 23S rRNA. The sequence is that of 23S rRNA (uracil(747)-C(5))-methyltransferase RlmC from Shewanella baltica (strain OS223).